A 57-amino-acid polypeptide reads, in one-letter code: uncharacterized protein (57 aa).

This is an uncharacterized protein from Homo sapiens (Human).